A 111-amino-acid polypeptide reads, in one-letter code: Ferredoxin, 2Fe-2S (111 aa).

The [2Fe-2S] cluster site is built by Cys-10, Cys-23, Cys-56, and Cys-60.

As to quaternary structure, homodimer in solution. The cofactor is [2Fe-2S] cluster.

In terms of biological role, ferredoxins are iron-sulfur proteins that transfer electrons in a wide variety of metabolic reactions. This is Ferredoxin, 2Fe-2S (fdx4) from Aquifex aeolicus (strain VF5).